Reading from the N-terminus, the 104-residue chain is Pyrimidine/purine nucleoside phosphorylase (104 aa).

It belongs to the nucleoside phosphorylase PpnP family.

The enzyme catalyses a purine D-ribonucleoside + phosphate = a purine nucleobase + alpha-D-ribose 1-phosphate. It catalyses the reaction adenosine + phosphate = alpha-D-ribose 1-phosphate + adenine. It carries out the reaction cytidine + phosphate = cytosine + alpha-D-ribose 1-phosphate. The catalysed reaction is guanosine + phosphate = alpha-D-ribose 1-phosphate + guanine. The enzyme catalyses inosine + phosphate = alpha-D-ribose 1-phosphate + hypoxanthine. It catalyses the reaction thymidine + phosphate = 2-deoxy-alpha-D-ribose 1-phosphate + thymine. It carries out the reaction uridine + phosphate = alpha-D-ribose 1-phosphate + uracil. The catalysed reaction is xanthosine + phosphate = alpha-D-ribose 1-phosphate + xanthine. Catalyzes the phosphorolysis of diverse nucleosides, yielding D-ribose 1-phosphate and the respective free bases. Can use uridine, adenosine, guanosine, cytidine, thymidine, inosine and xanthosine as substrates. Also catalyzes the reverse reactions. This chain is Pyrimidine/purine nucleoside phosphorylase, found in Geotalea daltonii (strain DSM 22248 / JCM 15807 / FRC-32) (Geobacter daltonii).